A 180-amino-acid polypeptide reads, in one-letter code: ATP-dependent protease subunit HslV (180 aa).

Residue Thr-8 is part of the active site. The Na(+) site is built by Ala-165, Cys-168, and Thr-171.

It belongs to the peptidase T1B family. HslV subfamily. In terms of assembly, a double ring-shaped homohexamer of HslV is capped on each side by a ring-shaped HslU homohexamer. The assembly of the HslU/HslV complex is dependent on binding of ATP.

Its subcellular location is the cytoplasm. The enzyme catalyses ATP-dependent cleavage of peptide bonds with broad specificity.. Its activity is regulated as follows. Allosterically activated by HslU binding. In terms of biological role, protease subunit of a proteasome-like degradation complex believed to be a general protein degrading machinery. This chain is ATP-dependent protease subunit HslV, found in Staphylococcus epidermidis (strain ATCC 12228 / FDA PCI 1200).